A 341-amino-acid chain; its full sequence is Ectoine-binding periplasmic protein TeaA (341 aa).

An N-terminal signal peptide occupies residues 1 to 25; the sequence is MKAYKLLTTASIGALMLGMSTAAYS. 5 residues coordinate L-ectoine: Glu-34, Arg-169, Asn-209, Trp-213, and Phe-234.

Belongs to the bacterial solute-binding protein 7 family. As to quaternary structure, monomer. The complex comprises the extracytoplasmic solute receptor protein TeaA, and the two transmembrane proteins TeaB and TeaC.

The protein resides in the periplasm. In terms of biological role, part of the tripartite ATP-independent periplasmic (TRAP) transport system TeaABC involved in the uptake of ectoine and hydroxyectoine in response to osmotic upshock. Probably functions as a recovery system for synthesized ectoine that leaks out of the cell. Binds ectoine with high affinity. Affinity for hydroxyectoine is approximately 20-fold lower. This is Ectoine-binding periplasmic protein TeaA (teaA) from Halomonas elongata (strain ATCC 33173 / DSM 2581 / NBRC 15536 / NCIMB 2198 / 1H9).